Consider the following 232-residue polypeptide: MSEDTPLVVAMDGPSGTGKSSVSRRLATRLGARYLDTGAMYRVATLRVLRAGVELTDPAAIAAAVKELPLTIGTDPSREVIELDGEDVSAEIRGDAVTKAVSAVSAVPEVRDLLVAAQRDIAADARRIVVEGRDIGTVVLPAADAKIYLTASAEARAERRNQQNIREGRGDDYAAVLADVQRRDTLDSTRAVSPLRPAADAVLVDTSELTMDEVIDELSRVVAQQISTGSAQ.

The tract at residues 1 to 21 (MSEDTPLVVAMDGPSGTGKSS) is disordered. 13 to 21 (GPSGTGKSS) serves as a coordination point for ATP.

This sequence belongs to the cytidylate kinase family. Type 1 subfamily.

The protein resides in the cytoplasm. The enzyme catalyses CMP + ATP = CDP + ADP. The catalysed reaction is dCMP + ATP = dCDP + ADP. This Nocardia farcinica (strain IFM 10152) protein is Cytidylate kinase.